Consider the following 396-residue polypeptide: Ribosomal RNA large subunit methyltransferase I (396 aa).

The PUA domain occupies 2–81 (SVRLVLAKGR…ESIDIAFFTR (80 aa)).

The protein belongs to the methyltransferase superfamily. RlmI family.

Its subcellular location is the cytoplasm. The enzyme catalyses cytidine(1962) in 23S rRNA + S-adenosyl-L-methionine = 5-methylcytidine(1962) in 23S rRNA + S-adenosyl-L-homocysteine + H(+). Specifically methylates the cytosine at position 1962 (m5C1962) of 23S rRNA. In Escherichia coli (strain UTI89 / UPEC), this protein is Ribosomal RNA large subunit methyltransferase I.